The sequence spans 2155 residues: Polyketide synthase 2 (2155 aa).

Residues 7–244 are N-terminal acylcarrier protein transacylase domain (SAT); that stretch reads FIFGDQTGGF…IPIPIWAPYH (238 aa). The Ketosynthase family 3 (KS3) domain maps to 374-807; the sequence is DSKIAIIGMS…GGNSALLLED (434 aa). Catalysis depends on for beta-ketoacyl synthase activity residues C546, H681, and H723. Residues 908-1213 form a malonyl-CoA:ACP transacylase (MAT) domain region; sequence GFVFSGQGAQ…ASLHRKDDGW (306 aa). S998 acts as the For acyl/malonyl transferase activity in catalysis. The segment at 1290–1605 is product template (PT) domain; sequence TSSVQRIIRQ…RSLLNKVLPP (316 aa). The segment at 1294-1428 is N-terminal hotdog fold; sequence QRIIRQTDGP…CLLRFADPTS (135 aa). The region spanning 1294–1600 is the PKS/mFAS DH domain; that stretch reads QRIIRQTDGP…FLGMSRSLLN (307 aa). H1327 acts as the Proton acceptor; for dehydratase activity in catalysis. The interval 1455 to 1600 is C-terminal hotdog fold; the sequence is TDSLLSKGIV…FLGMSRSLLN (146 aa). D1514 acts as the Proton donor; for dehydratase activity in catalysis. The segment at 1626 to 1654 is disordered; that stretch reads AASAKDTERRPLDIPTRAQRQPSSPQTGT. Residues 1643 to 1654 are compositionally biased toward polar residues; that stretch reads AQRQPSSPQTGT. One can recognise a Carrier 1 domain in the interval 1649-1726; it reads SPQTGTMGRI…ELKAFLGADQ (78 aa). S1686 carries the post-translational modification O-(pantetheine 4'-phosphoryl)serine. The disordered stretch occupies residues 1735–1765; that stretch reads SSIGQHTPQTSDKGSGTLASQKTDGDTGPDT. A compositionally biased stretch (polar residues) spans 1736 to 1756; sequence SIGQHTPQTSDKGSGTLASQK. The 75-residue stretch at 1764–1838 folds into the Carrier 2 domain; it reads DTTLNRVCAI…ALQKALCGSE (75 aa). S1798 is subject to O-(pantetheine 4'-phosphoryl)serine. The segment at 1873–2149 is thioesterase (TE) domain; it reads ASPPHATSIL…MVEMGNLIGD (277 aa). Catalysis depends on S1979, which acts as the For thioesterase activity.

Its function is as follows. Polyketide synthase; part of the Pks2 gene cluster that mediates the formation of infectious structures (appressoria), enabling these fungi to kill insects faster. The product of the Pks2 gene cluster is different from the one of Pks1 and has still not been identified. This chain is Polyketide synthase 2, found in Metarhizium anisopliae (strain ARSEF 549).